Here is a 207-residue protein sequence, read N- to C-terminus: p-benzoquinone reductase (207 aa).

The Flavodoxin-like domain occupies I5–V196. FMN is bound by residues S11–I16, T84–F86, S119–G125, and H140. Y13 provides a ligand contact to NADP(+).

Belongs to the WrbA family. As to quaternary structure, homodimer. It depends on FMN as a cofactor.

The catalysed reaction is 1,4-benzoquinone + NADPH + H(+) = hydroquinone + NADP(+). The protein operates within xenobiotic degradation; 4-nitrophenol degradation. Involved in the degradation of para-nitrophenol (PNP). Catalyzes the reduction of p-benzoquinone to hydroquinone. This Pseudomonas sp. (strain WBC-3) protein is p-benzoquinone reductase (pnpB).